Reading from the N-terminus, the 218-residue chain is Large ribosomal subunit protein uL1 (218 aa).

This sequence belongs to the universal ribosomal protein uL1 family. In terms of assembly, part of the 50S ribosomal subunit.

Functionally, binds directly to 23S rRNA. Probably involved in E site tRNA release. Protein L1 is also a translational repressor protein, it controls the translation of its operon by binding to its mRNA. The polypeptide is Large ribosomal subunit protein uL1 (Metallosphaera sedula (strain ATCC 51363 / DSM 5348 / JCM 9185 / NBRC 15509 / TH2)).